Here is a 148-residue protein sequence, read N- to C-terminus: Flavodoxin (148 aa).

Positions 4-145 (VLIVYGSTTG…DVSAWAGRVV (142 aa)) constitute a Flavodoxin-like domain.

This sequence belongs to the flavodoxin family. FMN is required as a cofactor.

Its function is as follows. Low-potential electron donor to a number of redox enzymes. In Nitratidesulfovibrio vulgaris (strain DSM 19637 / Miyazaki F) (Desulfovibrio vulgaris), this protein is Flavodoxin.